Here is a 305-residue protein sequence, read N- to C-terminus: Divergent heme oxygenase-like protein (305 aa).

The first 18 residues, 1 to 18 (MIRKIIILMFTFFSNIHN), serve as a signal peptide directing secretion. The tract at residues 1–83 (MIRKIIILMF…GVDKNNINYN (83 aa)) is sufficient for apicoplast targeting. 3 N-linked (GlcNAc...) asparagine glycosylation sites follow: N132, N159, and N288.

In terms of processing, proteolytically cleaved; targeted by its N-terminal leader sequence for import into the apicoplast where it undergoes proteolytic processing, resulting in an N-terminus starting at or near Gly-33 in the mature protein.

It localises to the plastid. The protein localises to the apicoplast. In terms of biological role, essential for blood-stage parasite viability. Required for apicoplast biogenesis. Associates with the apicoplast genome and mediates apicoplast gene expression. Can bind heme. Can bind protoporphyrin IX. This is Divergent heme oxygenase-like protein from Plasmodium falciparum (isolate 3D7).